The following is a 650-amino-acid chain: Aminopeptidase B (650 aa).

Alanine 2 bears the N-acetylalanine mark. Serine 7 carries the post-translational modification Phosphoserine. Substrate is bound at residue 298–302 (GGMEN). Histidine 325 contacts Zn(2+). Glutamate 326 (proton acceptor) is an active-site residue. Zn(2+) is bound by residues histidine 329 and glutamate 348. Position 446 is an N6-acetyllysine (lysine 446).

The protein belongs to the peptidase M1 family. Zn(2+) is required as a cofactor.

The protein localises to the secreted. It carries out the reaction Release of N-terminal Arg and Lys from oligopeptides when P1' is not Pro. Also acts on arylamides of Arg and Lys.. In terms of biological role, exopeptidase which selectively removes arginine and/or lysine residues from the N-terminus of several peptide substrates including Arg(0)-Leu-enkephalin, Arg(0)-Met-enkephalin and Arg(-1)-Lys(0)-somatostatin-14. Can hydrolyze leukotriene A4 (LTA-4) into leukotriene B4 (LTB-4). The polypeptide is Aminopeptidase B (RNPEP) (Homo sapiens (Human)).